Reading from the N-terminus, the 723-residue chain is BBSome complex assembly protein BBS10 (723 aa).

This sequence belongs to the TCP-1 chaperonin family. As to quaternary structure, component of a complex composed at least of MKKS, BBS10, BBS12, TCP1, CCT2, CCT3, CCT4, CCT5 and CCT8.

It is found in the cell projection. The protein resides in the cilium. Probable molecular chaperone that assists the folding of proteins upon ATP hydrolysis. Plays a role in the assembly of BBSome, a complex involved in ciliogenesis regulating transports vesicles to the cilia. Involved in adipogenic differentiation. The sequence is that of BBSome complex assembly protein BBS10 (BBS10) from Pongo abelii (Sumatran orangutan).